We begin with the raw amino-acid sequence, 132 residues long: DNA-entry nuclease inhibitor (132 aa).

This protein is a subunit of a 75 kDa protein complex, which governs binding and entry of donor DNA. The complex is a tetramer of two subunits of the DNA-entry nuclease and two subunits of a competence-specific protein. Only the complex is able to bind ds- and ss-DNA.

The protein localises to the cell membrane. In terms of biological role, plays a role in the competence of cells to be transformed. It inhibits the activity of the DNA-entry nuclease. The chain is DNA-entry nuclease inhibitor (nin) from Bacillus subtilis (strain 168).